The following is a 471-amino-acid chain: Putative multidrug resistance protein MdtD (471 aa).

Residues 1–11 (MTDLPDSTRWR) are Periplasmic-facing. The chain crosses the membrane as a helical span at residues 12–32 (LWIVAFGFFMQSLDTTIVNTA). Residues 33 to 48 (LPSMAQSLGESPLHMH) are Cytoplasmic-facing. A helical transmembrane segment spans residues 49 to 69 (MVIVSYVLTVAVMLPASGWLA). Over 70-76 (DKVGVRN) the chain is Periplasmic. A helical transmembrane segment spans residues 77 to 97 (IFFTAIVLFTLGSLFCALSGT). Topologically, residues 98-101 (LNEL) are cytoplasmic. Residues 102–124 (LLARALQGVGGAMMVPVGRLTVM) traverse the membrane as a helical segment. The Periplasmic portion of the chain corresponds to 125–137 (KIVPREQYMAAMT). Residues 138-158 (FVTLPGQVGPLLGPALGGLLV) form a helical membrane-spanning segment. The Cytoplasmic portion of the chain corresponds to 159–164 (EYASWH). A helical membrane pass occupies residues 165–185 (WIFLINIPVGIIGAIATLMLM). Residues 186-196 (PNYTMQTRRFD) are Periplasmic-facing. Residues 197–217 (LSGFLLLAVGMAVLTLALDGS) form a helical membrane-spanning segment. Residues 218 to 224 (KGTGLSP) are Cytoplasmic-facing. The helical transmembrane segment at 225 to 245 (LAIAGLVAVGVVALVLYLLHA) threads the bilayer. Topologically, residues 246–262 (QNNNRALFSLKLFRTRT) are periplasmic. Residues 263–283 (FSLGLAGSFAGRIGSGMLPFM) form a helical membrane-spanning segment. Residues 284–285 (TP) lie on the Cytoplasmic side of the membrane. Residues 286–306 (VFLQIGLGFSPFHAGLMMIPM) form a helical membrane-spanning segment. The Periplasmic segment spans residues 307-341 (VLGSMGMKRIVVQVVNRFGYRRVLVATTLGLSLVT). The helical transmembrane segment at 342–362 (LLFMTTALLGWYYVLPFVLFL) threads the bilayer. Residues 363–395 (QGMVNSTRFSSMNTLTLKDLPDNLASSGNSLLS) lie on the Cytoplasmic side of the membrane. Residues 396 to 416 (MIMQLSMSIGVTIAGLLLGLF) traverse the membrane as a helical segment. At 417–430 (GSQHVSVDSGTTQT) the chain is on the periplasmic side. The helical transmembrane segment at 431 to 451 (VFMYTWLSMASIIALPAFIFA) threads the bilayer. Over 452–471 (RVPNDTHQNVAISRRKRSAQ) the chain is Cytoplasmic.

It belongs to the major facilitator superfamily. TCR/Tet family.

Its subcellular location is the cell inner membrane. This is Putative multidrug resistance protein MdtD from Escherichia coli O6:K15:H31 (strain 536 / UPEC).